The primary structure comprises 144 residues: Deoxyuridine 5'-triphosphate nucleotidohydrolase (144 aa).

Residues 63 to 65 (RSG), asparagine 76, 80 to 82 (TID), and lysine 90 contribute to the substrate site.

The protein belongs to the dUTPase family. It depends on Mg(2+) as a cofactor.

The enzyme catalyses dUTP + H2O = dUMP + diphosphate + H(+). It participates in pyrimidine metabolism; dUMP biosynthesis; dUMP from dCTP (dUTP route): step 2/2. Its function is as follows. This enzyme is involved in nucleotide metabolism: it produces dUMP, the immediate precursor of thymidine nucleotides and it decreases the intracellular concentration of dUTP so that uracil cannot be incorporated into DNA. The protein is Deoxyuridine 5'-triphosphate nucleotidohydrolase of Hydrogenobaculum sp. (strain Y04AAS1).